The primary structure comprises 245 residues: Exosome complex component RRP41 (245 aa).

Ala2 carries the N-acetylalanine modification.

The protein belongs to the RNase PH family. In terms of assembly, component of the RNA exosome core complex (Exo-9), composed of EXOSC1, EXOSC2, EXOSC3, EXOSC4, EXOSC5, EXOSC6, EXOSC7, EXOSC8 and EXOSC9; within the complex interacts with EXOSC2, EXOSC7 and EXOSC9. The catalytically inactive RNA exosome core complex (Exo-9) associates with the catalytic subunit EXOSC10/RRP6. Exo-9 may associate with DIS3 to form the nucleolar exosome complex, or DIS3L to form the cytoplasmic exosome complex. Exo-9 is formed by a hexameric base ring consisting of the heterodimers EXOSC4-EXOSC9, EXOSC5-EXOSC8 and EXOSC6-EXOSC7, and a cap ring consisting of EXOSC1, EXOSC2 and EXOSC3. The RNA exosome complex associates with cofactors C1D/RRP47, MPHOSPH6/MPP6 and MTREX/MTR4. Interacts with DDX60. Interacts with DIS3; the interaction is direct.

The protein resides in the cytoplasm. It localises to the nucleus. It is found in the nucleolus. The protein localises to the nucleoplasm. Non-catalytic component of the RNA exosome complex which has 3'-&gt;5' exoribonuclease activity and participates in a multitude of cellular RNA processing and degradation events. In the nucleus, the RNA exosome complex is involved in proper maturation of stable RNA species such as rRNA, snRNA and snoRNA, in the elimination of RNA processing by-products and non-coding 'pervasive' transcripts, such as antisense RNA species and promoter-upstream transcripts (PROMPTs), and of mRNAs with processing defects, thereby limiting or excluding their export to the cytoplasm. The RNA exosome may be involved in Ig class switch recombination (CSR) and/or Ig variable region somatic hypermutation (SHM) by targeting AICDA deamination activity to transcribed dsDNA substrates. In the cytoplasm, the RNA exosome complex is involved in general mRNA turnover and specifically degrades inherently unstable mRNAs containing AU-rich elements (AREs) within their 3' untranslated regions, and in RNA surveillance pathways, preventing translation of aberrant mRNAs. It seems to be involved in degradation of histone mRNA. The catalytic inactive RNA exosome core complex of 9 subunits (Exo-9) is proposed to play a pivotal role in the binding and presentation of RNA for ribonucleolysis, and to serve as a scaffold for the association with catalytic subunits and accessory proteins or complexes. EXOSC4 binds to ARE-containing RNAs. This is Exosome complex component RRP41 (Exosc4) from Mus musculus (Mouse).